We begin with the raw amino-acid sequence, 271 residues long: Octanoyltransferase LipM (271 aa).

The BPL/LPL catalytic domain maps to 31-242; sequence GHNKPTLRFY…GLAEQFNVEF (212 aa). The Acyl-thioester intermediate role is filled by Cys144.

Belongs to the octanoyltransferase LipM family. As to quaternary structure, monomer.

It catalyses the reaction octanoyl-[ACP] + L-lysyl-[protein] = N(6)-octanoyl-L-lysyl-[protein] + holo-[ACP] + H(+). It functions in the pathway protein modification; protein lipoylation via endogenous pathway; protein N(6)-(lipoyl)lysine from octanoyl-[acyl-carrier-protein]. Its function is as follows. Catalyzes the transfer of endogenously produced octanoic acid from octanoyl-acyl-carrier-protein onto the lipoyl domain of GcvH, an intermediate carrier during protein lipoylation. The sequence is that of Octanoyltransferase LipM from Clostridioides difficile (strain 630) (Peptoclostridium difficile).